A 2104-amino-acid polypeptide reads, in one-letter code: Phenolphthiocerol synthesis polyketide synthase type I Pks15/1 (2104 aa).

The Ketosynthase family 3 (KS3) domain occupies 41-464 (TEPVAVVGIG…GTNAHVILEE (424 aa)). Active-site for beta-ketoacyl synthase activity residues include Cys-211, His-346, and His-386. The segment at 571–887 (TAVVFPGQGS…GQLFSTGMSV (317 aa)) is acyltransferase. The active-site For acyltransferase activity is Ser-662. The segment at 935 to 1057 (HALLGAVVER…GMLGVEAASS (123 aa)) is N-terminal hotdog fold. The tract at residues 935–1095 (HALLGAVVER…YAYGPGFQGL (161 aa)) is dehydratase. In terms of domain architecture, PKS/mFAS DH spans 935–1207 (HALLGAVVER…TRAMSAAQLR (273 aa)). His-967 serves as the catalytic Proton acceptor; for dehydratase activity. Residues 1069–1207 (AESVDISDGY…TRAMSAAQLR (139 aa)) form a C-terminal hotdog fold region. The Proton donor; for dehydratase activity role is filled by Asp-1128. An enoylreductase region spans residues 1400–1705 (GTLEDLVIEP…QARHIGKVVL (306 aa)). Residues 1530-1547 (VLIHAGTGGVGMAAVQLA) and 1719-1734 (TVLITGATGAVGAVLA) contribute to the NADP(+) site. The interval 1718 to 1899 (ATVLITGATG…SVAWGLWEQS (182 aa)) is beta-ketoacyl reductase (KR). A Carrier domain is found at 2004 to 2079 (DALVGLVCLQ…AIAEYVGRQI (76 aa)). Residue Ser-2039 is modified to O-(pantetheine 4'-phosphoryl)serine. Positions 2081–2104 (DSQATQAEEEKLPESDGEMVSVTA) are disordered.

This sequence belongs to the thiolase-like superfamily. Beta-ketoacyl-ACP synthases family. It depends on pantetheine 4'-phosphate as a cofactor.

It catalyses the reaction a fatty acyl-[ACP] + malonyl-[ACP] + H(+) = a 3-oxoacyl-[ACP] + holo-[ACP] + CO2. The protein operates within lipid metabolism; fatty acid biosynthesis. In terms of biological role, catalyzes the elongation by iterative transfer of p-hydroxybenzoyl group from FadD22 (pHBA-S-FAdD22) to form p-hydroxyphenylalkanoate (pHPA) intermediates during phenolphthiocerol (PPOL) biosynthesis. PPOL is an important intermediate in the biosynthesis of phenolic glycolipid (mycosid B). This is Phenolphthiocerol synthesis polyketide synthase type I Pks15/1 (pks15/1) from Mycobacterium marinum (strain ATCC BAA-535 / M).